Here is a 285-residue protein sequence, read N- to C-terminus: ATP synthase gamma chain (285 aa).

Belongs to the ATPase gamma chain family. F-type ATPases have 2 components, CF(1) - the catalytic core - and CF(0) - the membrane proton channel. CF(1) has five subunits: alpha(3), beta(3), gamma(1), delta(1), epsilon(1). CF(0) has three main subunits: a, b and c.

Its subcellular location is the cell membrane. Its function is as follows. Produces ATP from ADP in the presence of a proton gradient across the membrane. The gamma chain is believed to be important in regulating ATPase activity and the flow of protons through the CF(0) complex. This chain is ATP synthase gamma chain, found in Lysinibacillus sphaericus (strain C3-41).